The chain runs to 259 residues: Protein IQ-DOMAIN 10 (259 aa).

The segment at 18–39 (KNKSNRGNVHSETSNRVKPVES) is disordered. An IQ domain is found at 50–77 (EVAVIRIQKAFRAFKARKRLCSLKSARR). The interval 61–71 (RAFKARKRLCS) is calmodulin-binding. Positions 226–259 (KPSKKPEKSSPNNVITKTSAKPDEVGNSKKPGSG) are disordered.

The protein belongs to the IQD family. As to quaternary structure, binds to multiple calmodulin (CaM) in the presence of Ca(2+) and CaM-like proteins.

It is found in the nucleus. The protein resides in the cytoplasm. It localises to the cytoskeleton. Functionally, may be involved in cooperative interactions with calmodulins or calmodulin-like proteins. Recruits calmodulin proteins to microtubules, thus being a potential scaffold in cellular signaling and trafficking. May associate with nucleic acids and regulate gene expression at the transcriptional or post-transcriptional level. This is Protein IQ-DOMAIN 10 from Arabidopsis thaliana (Mouse-ear cress).